Reading from the N-terminus, the 390-residue chain is Transposase for insertion sequence element IS21 (390 aa).

One can recognise an HTH IS21-type domain in the interval 5–66 (EDFYMIKQMR…PFMDYIDMRL (62 aa)). The H-T-H motif DNA-binding region spans 20–39 (IVDIATQIGCSERTVRRYLK). Positions 111-285 (FETQPRYQLQ…TPEQRFALEQ (175 aa)) constitute an Integrase catalytic domain.

It belongs to the transposase IS21/IS408/IS1162 family.

Functionally, involved in the transposition of the insertion sequence. The chain is Transposase for insertion sequence element IS21 (istA) from Pseudomonas aeruginosa.